The primary structure comprises 271 residues: Endonuclease V (271 aa).

The tract at residues 46–67 (TRTGDAPDVDQTTLSTSADDRT) is disordered. Mg(2+) is bound by residues aspartate 76 and aspartate 140.

Belongs to the endonuclease V family. The cofactor is Mg(2+).

The protein resides in the cytoplasm. It carries out the reaction Endonucleolytic cleavage at apurinic or apyrimidinic sites to products with a 5'-phosphate.. DNA repair enzyme involved in the repair of deaminated bases. Selectively cleaves double-stranded DNA at the second phosphodiester bond 3' to a deoxyinosine leaving behind the intact lesion on the nicked DNA. This Haloarcula marismortui (strain ATCC 43049 / DSM 3752 / JCM 8966 / VKM B-1809) (Halobacterium marismortui) protein is Endonuclease V.